We begin with the raw amino-acid sequence, 361 residues long: Holliday junction branch migration complex subunit RuvB (361 aa).

Residues 1 to 25 (MSIHTDDFGQGGFAQGGFPPDKAPD) form a disordered region. The interval 5 to 207 (TDDFGQGGFA…FGIVARLEFY (203 aa)) is large ATPase domain (RuvB-L). ATP contacts are provided by residues Leu46, Arg47, Gly88, Lys91, Thr92, Thr93, 154–156 (EDY), Arg197, Tyr207, and Arg244. Thr92 lines the Mg(2+) pocket. The small ATPAse domain (RuvB-S) stretch occupies residues 208–278 (TAEELARIVR…LADRALAMLD (71 aa)). The segment at 281–361 (PQGFDIMDRK…GLPVPGDDAS (81 aa)) is head domain (RuvB-H). DNA is bound by residues Arg336 and Arg341.

The protein belongs to the RuvB family. Homohexamer. Forms an RuvA(8)-RuvB(12)-Holliday junction (HJ) complex. HJ DNA is sandwiched between 2 RuvA tetramers; dsDNA enters through RuvA and exits via RuvB. An RuvB hexamer assembles on each DNA strand where it exits the tetramer. Each RuvB hexamer is contacted by two RuvA subunits (via domain III) on 2 adjacent RuvB subunits; this complex drives branch migration. In the full resolvosome a probable DNA-RuvA(4)-RuvB(12)-RuvC(2) complex forms which resolves the HJ.

It is found in the cytoplasm. The enzyme catalyses ATP + H2O = ADP + phosphate + H(+). In terms of biological role, the RuvA-RuvB-RuvC complex processes Holliday junction (HJ) DNA during genetic recombination and DNA repair, while the RuvA-RuvB complex plays an important role in the rescue of blocked DNA replication forks via replication fork reversal (RFR). RuvA specifically binds to HJ cruciform DNA, conferring on it an open structure. The RuvB hexamer acts as an ATP-dependent pump, pulling dsDNA into and through the RuvAB complex. RuvB forms 2 homohexamers on either side of HJ DNA bound by 1 or 2 RuvA tetramers; 4 subunits per hexamer contact DNA at a time. Coordinated motions by a converter formed by DNA-disengaged RuvB subunits stimulates ATP hydrolysis and nucleotide exchange. Immobilization of the converter enables RuvB to convert the ATP-contained energy into a lever motion, pulling 2 nucleotides of DNA out of the RuvA tetramer per ATP hydrolyzed, thus driving DNA branch migration. The RuvB motors rotate together with the DNA substrate, which together with the progressing nucleotide cycle form the mechanistic basis for DNA recombination by continuous HJ branch migration. Branch migration allows RuvC to scan DNA until it finds its consensus sequence, where it cleaves and resolves cruciform DNA. The polypeptide is Holliday junction branch migration complex subunit RuvB (Delftia acidovorans (strain DSM 14801 / SPH-1)).